The primary structure comprises 375 residues: Alcohol dehydrogenase 1C (375 aa).

N-acetylserine is present on Ser-2. Residue Ser-23 is modified to Phosphoserine. Cys-47, His-68, Cys-98, Cys-101, Cys-104, Cys-112, and Cys-175 together coordinate Zn(2+). NAD(+)-binding positions include 200–205, Asp-224, Lys-229, Ile-270, 293–295, 318–320, and Arg-370; these read GLGGVG, VGV, and AIF.

Belongs to the zinc-containing alcohol dehydrogenase family. Dimer of identical or non-identical chains of class I alcohol dehydrogenase: ADH1A, ADH1B, and ADH1C. It depends on Zn(2+) as a cofactor. As to expression, expressed in kidney.

Its subcellular location is the cytoplasm. The enzyme catalyses a primary alcohol + NAD(+) = an aldehyde + NADH + H(+). It catalyses the reaction ethanol + NAD(+) = acetaldehyde + NADH + H(+). Alcohol dehydrogenase. Exhibits high activity for ethanol oxidation and plays a major role in ethanol catabolism. The sequence is that of Alcohol dehydrogenase 1C (ADH1C) from Papio hamadryas (Hamadryas baboon).